The chain runs to 152 residues: Xanthine-guanine phosphoribosyltransferase (152 aa).

5-phospho-alpha-D-ribose 1-diphosphate-binding positions include 37–38 (RG), Arg-69, and 88–96 (DDLVDTGVT). Arg-69 contributes to the GMP binding site. Asp-89 provides a ligand contact to Mg(2+). Guanine-binding residues include Asp-92 and Ile-135. Residues Asp-92 and Ile-135 each contribute to the xanthine site. Residues 92–96 (DTGVT) and 134–135 (WI) each bind GMP.

It belongs to the purine/pyrimidine phosphoribosyltransferase family. XGPT subfamily. In terms of assembly, homotetramer. It depends on Mg(2+) as a cofactor.

The protein localises to the cell inner membrane. It catalyses the reaction GMP + diphosphate = guanine + 5-phospho-alpha-D-ribose 1-diphosphate. The catalysed reaction is XMP + diphosphate = xanthine + 5-phospho-alpha-D-ribose 1-diphosphate. It carries out the reaction IMP + diphosphate = hypoxanthine + 5-phospho-alpha-D-ribose 1-diphosphate. The protein operates within purine metabolism; GMP biosynthesis via salvage pathway; GMP from guanine: step 1/1. Its pathway is purine metabolism; XMP biosynthesis via salvage pathway; XMP from xanthine: step 1/1. In terms of biological role, purine salvage pathway enzyme that catalyzes the transfer of the ribosyl-5-phosphate group from 5-phospho-alpha-D-ribose 1-diphosphate (PRPP) to the N9 position of the 6-oxopurines guanine and xanthine to form the corresponding ribonucleotides GMP (guanosine 5'-monophosphate) and XMP (xanthosine 5'-monophosphate), with the release of PPi. To a lesser extent, also acts on hypoxanthine. This Sodalis glossinidius (strain morsitans) protein is Xanthine-guanine phosphoribosyltransferase.